Reading from the N-terminus, the 118-residue chain is Large ribosomal subunit protein bL19 (118 aa).

It belongs to the bacterial ribosomal protein bL19 family.

This protein is located at the 30S-50S ribosomal subunit interface and may play a role in the structure and function of the aminoacyl-tRNA binding site. This Frankia alni (strain DSM 45986 / CECT 9034 / ACN14a) protein is Large ribosomal subunit protein bL19.